We begin with the raw amino-acid sequence, 661 residues long: Peroxisomal acyl-coenzyme A oxidase 1 (661 aa).

Residue serine 26 is modified to Phosphoserine. N6-acetyllysine is present on lysine 65. Lysine 89 carries the N6-succinyllysine modification. Threonine 139 contributes to the FAD binding site. Lysine 159 is modified (N6-succinyllysine). Glycine 178 is a binding site for FAD. Lysine 216 carries the post-translational modification N6-acetyllysine. Lysine 241 bears the N6-succinyllysine mark. Lysine 255, lysine 267, and lysine 272 each carry N6-acetyllysine. At lysine 349 the chain carries N6-succinyllysine. The active-site Proton acceptor is the glutamate 421. N6-acetyllysine; alternate is present on residues lysine 437 and lysine 446. Lysine 437 and lysine 446 each carry N6-succinyllysine; alternate. Lysine 500 carries the post-translational modification N6-acetyllysine. Lysine 512 carries the N6-acetyllysine; alternate modification. Lysine 512 carries the N6-succinyllysine; alternate modification. N6-succinyllysine is present on lysine 542. Lysine 637 carries the N6-acetyllysine; alternate modification. Position 637 is an N6-succinyllysine; alternate (lysine 637). An N6-succinyllysine modification is found at lysine 643. At serine 649 the chain carries Phosphoserine. Lysine 652 bears the N6-acetyllysine mark. Lysine 655 carries the post-translational modification N6-succinyllysine. Positions 659–661 match the Microbody targeting signal motif; it reads SKL.

It belongs to the acyl-CoA oxidase family. In terms of assembly, homodimer. Interacts with LONP2. The cofactor is FAD.

The protein resides in the peroxisome. The enzyme catalyses a 2,3-saturated acyl-CoA + O2 = a (2E)-enoyl-CoA + H2O2. The catalysed reaction is hexadecanoyl-CoA + O2 = (2E)-hexadecenoyl-CoA + H2O2. It carries out the reaction dodecanoyl-CoA + O2 = (2E)-dodecenoyl-CoA + H2O2. It catalyses the reaction octanoyl-CoA + O2 = (2E)-octenoyl-CoA + H2O2. The enzyme catalyses decanoyl-CoA + O2 = (2E)-decenoyl-CoA + H2O2. The catalysed reaction is tetradecanoyl-CoA + O2 = (2E)-tetradecenoyl-CoA + H2O2. It carries out the reaction hexadecanedioyl-CoA + O2 = (2E)-hexadecenedioyl-CoA + H2O2. It catalyses the reaction tetracosanoyl-CoA + O2 = (2E)-tetracosenoyl-CoA + H2O2. The enzyme catalyses glutaryl-CoA + O2 = (2E)-glutaconyl-CoA + H2O2. The catalysed reaction is hexanoyl-CoA + O2 = (2E)-hexenoyl-CoA + H2O2. It carries out the reaction octadecanoyl-CoA + O2 = (2E)-octadecenoyl-CoA + H2O2. It catalyses the reaction (5Z,8Z,11Z,14Z,17Z)-eicosapentaenoyl-CoA + O2 = (2E,5Z,8Z,11Z,14Z,17Z)-icosahexaenoyl-CoA + H2O2. The enzyme catalyses (6Z,9Z,12Z,15Z,18Z,21Z)-tetracosahexaenoyl-CoA + O2 = (2E,6Z,9Z,12Z,15Z,18Z,21Z)-tetracosaheptaenoyl-CoA + H2O2. It functions in the pathway lipid metabolism; peroxisomal fatty acid beta-oxidation. Involved in the initial and rate-limiting step of peroxisomal beta-oxidation of straight-chain saturated and unsaturated very-long-chain fatty acids. Catalyzes the desaturation of fatty acyl-CoAs such as palmitoyl-CoA (hexadecanoyl-CoA) to 2-trans-enoyl-CoAs ((2E)-enoyl-CoAs) such as (2E)-hexadecenoyl-CoA, and donates electrons directly to molecular oxygen (O(2)), thereby producing hydrogen peroxide (H(2)O(2)). The sequence is that of Peroxisomal acyl-coenzyme A oxidase 1 from Cavia porcellus (Guinea pig).